The sequence spans 342 residues: L-threonine 3-dehydrogenase (342 aa).

Cys38 serves as a coordination point for Zn(2+). Residues Thr40 and His43 each act as charge relay system in the active site. The Zn(2+) site is built by His63, Glu64, Cys93, Cys96, Cys99, and Cys107. NAD(+)-binding positions include Ile175, Asp195, Arg200, 262-264, and 286-287; these read LGI and IY.

This sequence belongs to the zinc-containing alcohol dehydrogenase family. Homotetramer. Zn(2+) serves as cofactor.

The protein localises to the cytoplasm. The catalysed reaction is L-threonine + NAD(+) = (2S)-2-amino-3-oxobutanoate + NADH + H(+). It participates in amino-acid degradation; L-threonine degradation via oxydo-reductase pathway; glycine from L-threonine: step 1/2. Catalyzes the NAD(+)-dependent oxidation of L-threonine to 2-amino-3-ketobutyrate. This Burkholderia vietnamiensis (strain G4 / LMG 22486) (Burkholderia cepacia (strain R1808)) protein is L-threonine 3-dehydrogenase.